The following is a 514-amino-acid chain: MTRKNVLLIVVDQWRADFIPHLMRAEGREPFLKTPNLDRLCREGLTFRNHVTTCVPCGPARASLLTGLYLMNHRAVQNTVPLDQRHLNLGKALRAIGYDPALIGYTTTTPDPRTTSARDPRFTVLGDIMDGFRSVGAFEPNMEGYFGWVAQNGFELPENREDIWLPEGEHSVPGATDKPSRIPKEFSDSTFFTERALTYLKGRDGKPFFLHLGYYRPHPPFVASAPYHAMYKAEDMPAPIRAENPDAEAAQHPLMKHYIDHIRRGSFFHGAEGSGATLDEGEIRQMRATYCGLITEIDDCLGRVFAYLDETGQWDDTLIIFTSDHGEQLGDHHLLGKIGYNAESFRIPLVIKDAGQNRHAGQIEEGFSESIDVMPTILEWLGGETPRACDGRSLLPFLAEGKPSDWRTELHYEFDFRDVFYDQPQNSVQLSQDDCSLCVIEDENYKYVHFAALPPLFFDLKADPHEFSNLAGDPAYAALVRDYAQKALSWRLSHADRTLTHYRSSPQGLTTRNH.

Residues D12, C57, D324, and H325 each contribute to the Mn(2+) site. The Nucleophile role is filled by C57. C57 is subject to 3-oxoalanine (Cys).

Belongs to the alkaline phosphatase superfamily. In terms of assembly, homotetramer. It depends on Mn(2+) as a cofactor. In terms of processing, the conversion to 3-oxoalanine (also known as C-formylglycine, FGly), of a serine or cysteine residue in prokaryotes and of a cysteine residue in eukaryotes, is critical for catalytic activity. Phosphate triester hydrolytic activity is retained with unmodified cysteine acting as a nucleophile.

With respect to regulation, anions including Cl(-) and CH3COO(-), and SO4(2-) salts stimulate activity 20-40% at 100 mM. Its function is as follows. Hydrolytic enzyme with a broad substrate specificity acting on phosphate diesters and phosphonate monoesters. Hydrolyzes phosphate mono- and triesters, sulfate monoesters and sulfonate monoesters. Hydrolyzes glyphosate monoesters. Does not hydrolyze DNA or cGMP. Hydrolyzes glyceryl glyphosate, but this substrate has a much lower affinity than the glyphosate monoesters. This Trinickia caryophylli (Paraburkholderia caryophylli) protein is Multifunctional alkaline phosphatase superfamily protein PehA.